Reading from the N-terminus, the 387-residue chain is Flap endonuclease 1 (387 aa).

The interval 1–104 (MGIKGLSQLI…GELEKRKERQ (104 aa)) is N-domain. Aspartate 34 provides a ligand contact to Mg(2+). Arginine 70 serves as a coordination point for DNA. Positions 86, 158, 160, 179, and 181 each coordinate Mg(2+). An I-domain region spans residues 122 to 253 (KMVMWNKRTT…KKALAMIKKY (132 aa)). Glutamate 158 contributes to the DNA binding site. Positions 231 and 233 each coordinate DNA. A Mg(2+)-binding site is contributed by aspartate 233. Residues 332–387 (SSRGKPTQTRLDGFFTPVASSSTTKKKAPAKKDDKKSATDKKRKAADASTSSKKKK) are disordered. The tract at residues 338-346 (TQTRLDGFF) is interaction with PCNA. Residues 361-371 (AKKDDKKSATD) show a composition bias toward basic and acidic residues. Residues 378-387 (DASTSSKKKK) show a composition bias toward low complexity.

The protein belongs to the XPG/RAD2 endonuclease family. FEN1 subfamily. In terms of assembly, interacts with PCNA. Three molecules of FEN1 bind to one PCNA trimer with each molecule binding to one PCNA monomer. PCNA stimulates the nuclease activity without altering cleavage specificity. Mg(2+) serves as cofactor. Post-translationally, phosphorylated. Phosphorylation upon DNA damage induces relocalization to the nuclear plasma.

The protein localises to the nucleus. It is found in the nucleolus. The protein resides in the nucleoplasm. It localises to the mitochondrion. Functionally, structure-specific nuclease with 5'-flap endonuclease and 5'-3' exonuclease activities involved in DNA replication and repair. During DNA replication, cleaves the 5'-overhanging flap structure that is generated by displacement synthesis when DNA polymerase encounters the 5'-end of a downstream Okazaki fragment. It enters the flap from the 5'-end and then tracks to cleave the flap base, leaving a nick for ligation. Also involved in the long patch base excision repair (LP-BER) pathway, by cleaving within the apurinic/apyrimidinic (AP) site-terminated flap. Acts as a genome stabilization factor that prevents flaps from equilibrating into structures that lead to duplications and deletions. Also possesses 5'-3' exonuclease activity on nicked or gapped double-stranded DNA, and exhibits RNase H activity. Also involved in replication and repair of rDNA and in repairing mitochondrial DNA. This is Flap endonuclease 1 from Naegleria gruberi (Amoeba).